Reading from the N-terminus, the 466-residue chain is 3-isopropylmalate dehydratase large subunit (466 aa).

3 residues coordinate [4Fe-4S] cluster: cysteine 347, cysteine 407, and cysteine 410.

The protein belongs to the aconitase/IPM isomerase family. LeuC type 1 subfamily. Heterodimer of LeuC and LeuD. [4Fe-4S] cluster is required as a cofactor.

It carries out the reaction (2R,3S)-3-isopropylmalate = (2S)-2-isopropylmalate. It participates in amino-acid biosynthesis; L-leucine biosynthesis; L-leucine from 3-methyl-2-oxobutanoate: step 2/4. Its function is as follows. Catalyzes the isomerization between 2-isopropylmalate and 3-isopropylmalate, via the formation of 2-isopropylmaleate. The protein is 3-isopropylmalate dehydratase large subunit of Klebsiella pneumoniae subsp. pneumoniae (strain ATCC 700721 / MGH 78578).